Here is a 242-residue protein sequence, read N- to C-terminus: Ribosomal RNA large subunit methyltransferase E (242 aa).

S-adenosyl-L-methionine contacts are provided by Gly-88, Trp-90, Asp-111, Asp-127, and Asp-151. The Proton acceptor role is filled by Lys-191.

This sequence belongs to the class I-like SAM-binding methyltransferase superfamily. RNA methyltransferase RlmE family.

It is found in the cytoplasm. It carries out the reaction uridine(2552) in 23S rRNA + S-adenosyl-L-methionine = 2'-O-methyluridine(2552) in 23S rRNA + S-adenosyl-L-homocysteine + H(+). Its function is as follows. Specifically methylates the uridine in position 2552 of 23S rRNA at the 2'-O position of the ribose in the fully assembled 50S ribosomal subunit. In Bartonella tribocorum (strain CIP 105476 / IBS 506), this protein is Ribosomal RNA large subunit methyltransferase E.